A 391-amino-acid chain; its full sequence is 3-ketoacyl-CoA thiolase (391 aa).

Cysteine 95 (acyl-thioester intermediate) is an active-site residue. Active-site proton acceptor residues include histidine 347 and cysteine 377.

The protein belongs to the thiolase-like superfamily. Thiolase family. In terms of assembly, heterotetramer of two alpha chains (FadB) and two beta chains (FadA).

Its subcellular location is the cytoplasm. The catalysed reaction is an acyl-CoA + acetyl-CoA = a 3-oxoacyl-CoA + CoA. It participates in lipid metabolism; fatty acid beta-oxidation. Functionally, catalyzes the final step of fatty acid oxidation in which acetyl-CoA is released and the CoA ester of a fatty acid two carbons shorter is formed. The chain is 3-ketoacyl-CoA thiolase from Pseudomonas fragi.